The primary structure comprises 173 residues: Crossover junction endodeoxyribonuclease RuvC (173 aa).

Residues aspartate 8, glutamate 67, and aspartate 139 contribute to the active site. 3 residues coordinate Mg(2+): aspartate 8, glutamate 67, and aspartate 139.

This sequence belongs to the RuvC family. Homodimer which binds Holliday junction (HJ) DNA. The HJ becomes 2-fold symmetrical on binding to RuvC with unstacked arms; it has a different conformation from HJ DNA in complex with RuvA. In the full resolvosome a probable DNA-RuvA(4)-RuvB(12)-RuvC(2) complex forms which resolves the HJ. Mg(2+) serves as cofactor.

It localises to the cytoplasm. The enzyme catalyses Endonucleolytic cleavage at a junction such as a reciprocal single-stranded crossover between two homologous DNA duplexes (Holliday junction).. In terms of biological role, the RuvA-RuvB-RuvC complex processes Holliday junction (HJ) DNA during genetic recombination and DNA repair. Endonuclease that resolves HJ intermediates. Cleaves cruciform DNA by making single-stranded nicks across the HJ at symmetrical positions within the homologous arms, yielding a 5'-phosphate and a 3'-hydroxyl group; requires a central core of homology in the junction. The consensus cleavage sequence is 5'-(A/T)TT(C/G)-3'. Cleavage occurs on the 3'-side of the TT dinucleotide at the point of strand exchange. HJ branch migration catalyzed by RuvA-RuvB allows RuvC to scan DNA until it finds its consensus sequence, where it cleaves and resolves the cruciform DNA. This chain is Crossover junction endodeoxyribonuclease RuvC, found in Shewanella baltica (strain OS223).